The chain runs to 257 residues: Large ribosomal subunit protein uL2 (257 aa).

The disordered stretch occupies residues 207–257 (VDHPHGGGNHQHVGHPTTLKRSSPPGQKAGKVAARRTGLIRGGNKEGAADN).

Belongs to the universal ribosomal protein uL2 family. In terms of assembly, component of the large ribosomal subunit.

It is found in the cytoplasm. Its function is as follows. Component of the large ribosomal subunit. The ribosome is a large ribonucleoprotein complex responsible for the synthesis of proteins in the cell. The chain is Large ribosomal subunit protein uL2 (RPL8) from Entamoeba histolytica (strain ATCC 30459 / HM-1:IMSS / ABRM).